Here is a 101-residue protein sequence, read N- to C-terminus: Parathymosin (101 aa).

A disordered region spans residues 1–101 (MSEKSVEAAA…RQKTENGASA (101 aa)). An N-acetylserine modification is found at serine 2. At serine 2 the chain carries Phosphoserine. Lysine 4 is modified (N6-acetyllysine). 2 positions are modified to phosphoserine: serine 5 and serine 13. The segment covering 13 to 37 (SAKDLKEKKDKVEEKAGRKERKKEV) has biased composition (basic and acidic residues). Residue lysine 15 is modified to N6-acetyllysine. Over residues 38–74 (VEEEENGAEEEEEETAEDGEDDDEGDEEDEEEEEEDE) the composition is skewed to acidic residues. Threonine 52 is subject to Phosphothreonine. N6-acetyllysine is present on lysine 91.

It belongs to the pro/parathymosin family.

Functionally, parathymosin may mediate immune function by blocking the effect of prothymosin alpha which confers resistance to certain opportunistic infections. This chain is Parathymosin (Ptms), found in Mus musculus (Mouse).